Here is a 102-residue protein sequence, read N- to C-terminus: Large ribosomal subunit protein uL23c (102 aa).

Belongs to the universal ribosomal protein uL23 family. As to quaternary structure, part of the 50S ribosomal subunit.

Its subcellular location is the plastid. It localises to the chloroplast. Its function is as follows. Binds to 23S rRNA. This Phaeodactylum tricornutum (strain CCAP 1055/1) protein is Large ribosomal subunit protein uL23c (rpl23).